A 354-amino-acid chain; its full sequence is MYVAVKGGEKAIDAAHALQESRRRGDTDLPELSVAQIEQQLNLAVDRVMTEGGIADRELAALALKQASGDNVEAIFLLRAYRTTLAKLAVSEPLDTTGMRLERRISAVYKDIPGGQLLGPTYDYTHRLLDFTLLANGEAPTLTTADSEQQPSPHVFSLLARQGLAKFEEDSGAQPDDITRTPPVYPCSRSSRLQQLMRGDEGYLLALAYSTQRGYGRNHPFAGEIRSGYIDVSIVPEELGFAVNVGELLMTECEMVNGFIDPPGEPPHFTRGYGLVFGMSERKAMAMALVDRALQAPEYGEHATGPAQDEEFVLAHADNVEAAGFVSHLKLPHYVDFQAELELLKRLQQEQNHG.

Belongs to the PhnI family. As to quaternary structure, forms a complex with PhnG, PhnH, PhnJ and PhnK with the suggested composition PhnG(4)H(2)I(2)J(2)K.

The catalysed reaction is methylphosphonate + ATP = alpha-D-ribose 1-methylphosphonate 5-triphosphate + adenine. It carries out the reaction ATP + H2O = D-ribose 5-triphosphate + adenine. In terms of biological role, together with PhnG, PhnH and PhnL is required for the transfer of the ribose triphosphate moiety from ATP to methyl phosphonate. PhnI alone has nucleosidase activity, catalyzing the hydrolysis of ATP or GTP forming alpha-D-ribose 5-triphosphate and adenine or guanine, respectively. The protein is Alpha-D-ribose 1-methylphosphonate 5-triphosphate synthase subunit PhnI (phnI) of Escherichia coli (strain K12).